The following is a 65-amino-acid chain: GRDAYIAQPENCVYECAKNSYCNDLCTKNGAKSGYCQWLGKYGNACWCEDLPDNVPIRIPGKCHF.

One can recognise an LCN-type CS-alpha/beta domain in the interval 2-64 (RDAYIAQPEN…VPIRIPGKCH (63 aa)). Disulfide bonds link cysteine 12-cysteine 63, cysteine 16-cysteine 36, cysteine 22-cysteine 46, and cysteine 26-cysteine 48.

This sequence belongs to the long (4 C-C) scorpion toxin superfamily. Sodium channel inhibitor family. Alpha subfamily. Expressed by the venom gland.

The protein resides in the secreted. Functionally, alpha toxins bind voltage-independently at site-3 of sodium channels (Nav) and inhibit the inactivation of the activated channels, thereby blocking neuronal transmission. This alpha-like toxin is highly toxic to mice and insects. This chain is Alpha-like toxin Bom4, found in Buthus occitanus mardochei (Moroccan scorpion).